We begin with the raw amino-acid sequence, 399 residues long: Phosphoglycerate kinase (399 aa).

Residues 22-24, Arg-37, 60-63, Arg-119, and Arg-152 each bind substrate; these read DLN and HFGR. ATP is bound by residues Lys-202, Glu-324, and 354 to 357; that span reads GGDT.

It belongs to the phosphoglycerate kinase family. As to quaternary structure, monomer.

Its subcellular location is the cytoplasm. The catalysed reaction is (2R)-3-phosphoglycerate + ATP = (2R)-3-phospho-glyceroyl phosphate + ADP. It functions in the pathway carbohydrate degradation; glycolysis; pyruvate from D-glyceraldehyde 3-phosphate: step 2/5. This is Phosphoglycerate kinase from Sinorhizobium fredii (strain NBRC 101917 / NGR234).